We begin with the raw amino-acid sequence, 276 residues long: Diaminopimelate epimerase (276 aa).

Substrate is bound by residues Asn-13, Gln-46, and Asn-66. Cys-75 serves as the catalytic Proton donor. Substrate contacts are provided by residues 76-77 (GN), Asn-159, Asn-192, and 210-211 (ER). The active-site Proton acceptor is the Cys-219. 220–221 (GT) lines the substrate pocket.

The protein belongs to the diaminopimelate epimerase family. In terms of assembly, homodimer.

It localises to the cytoplasm. The enzyme catalyses (2S,6S)-2,6-diaminopimelate = meso-2,6-diaminopimelate. It participates in amino-acid biosynthesis; L-lysine biosynthesis via DAP pathway; DL-2,6-diaminopimelate from LL-2,6-diaminopimelate: step 1/1. In terms of biological role, catalyzes the stereoinversion of LL-2,6-diaminopimelate (L,L-DAP) to meso-diaminopimelate (meso-DAP), a precursor of L-lysine and an essential component of the bacterial peptidoglycan. The polypeptide is Diaminopimelate epimerase (Ectopseudomonas mendocina (strain ymp) (Pseudomonas mendocina)).